The following is a 529-amino-acid chain: Probable anion transporter 1, chloroplastic (529 aa).

The transit peptide at 1 to 55 (MLYLLPLSVSCRVPGSPPAPRSRRFLDPGGGRGVGDGLGGVRVFRRRALRGTDVR) directs the protein to the chloroplast. Disordered regions lie at residues 13 to 39 (VPGSPPAPRSRRFLDPGGGRGVGDGLG) and 52 to 78 (TDVRSNTSSSSSRKGRHDDARHDGGYG). A compositionally biased stretch (gly residues) spans 28-39 (PGGGRGVGDGLG). The segment covering 67 to 76 (RHDDARHDGG) has biased composition (basic and acidic residues). 11 consecutive transmembrane segments (helical) span residues 120–140 (WAIVFLCFSAFLLCNMDRVNM), 158–178 (VGLIQSSFFWGYLLTQIAGGI), 187–207 (TVLGFGVIWWSIATALTPFAA), 209–229 (LGLPFLLVTRAFMGVGEGVAM), 251–271 (LVYSGMYLGSVTGLAFSPLLI), 274–294 (FGWPSVFYSFGSLGVFWFSTW), 340–360 (VWALIVSHFCHNWGTFILLTW), 378–398 (LFCVLPWLTMAVSANFGGWIA), 418–438 (IGFLGPAFFLTQLSHIDSPAM), 469–489 (AGVLLGLSNTAGVLAGVFGTA), and 503–523 (VFKVSVVLYLVGTLVWNLFST).

It belongs to the major facilitator superfamily. Sodium/anion cotransporter (TC 2.A.1.14) family.

It localises to the plastid. The protein localises to the chloroplast membrane. Its function is as follows. Probable anion transporter. This is Probable anion transporter 1, chloroplastic (PHT4;1) from Oryza sativa subsp. japonica (Rice).